The chain runs to 485 residues: Probable glycine dehydrogenase (decarboxylating) subunit 2 (485 aa).

An N6-(pyridoxal phosphate)lysine modification is found at lysine 273.

This sequence belongs to the GcvP family. C-terminal subunit subfamily. As to quaternary structure, the glycine cleavage system is composed of four proteins: P, T, L and H. In this organism, the P 'protein' is a heterodimer of two subunits. Pyridoxal 5'-phosphate is required as a cofactor.

The catalysed reaction is N(6)-[(R)-lipoyl]-L-lysyl-[glycine-cleavage complex H protein] + glycine + H(+) = N(6)-[(R)-S(8)-aminomethyldihydrolipoyl]-L-lysyl-[glycine-cleavage complex H protein] + CO2. Its function is as follows. The glycine cleavage system catalyzes the degradation of glycine. The P protein binds the alpha-amino group of glycine through its pyridoxal phosphate cofactor; CO(2) is released and the remaining methylamine moiety is then transferred to the lipoamide cofactor of the H protein. The sequence is that of Probable glycine dehydrogenase (decarboxylating) subunit 2 from Caldanaerobacter subterraneus subsp. tengcongensis (strain DSM 15242 / JCM 11007 / NBRC 100824 / MB4) (Thermoanaerobacter tengcongensis).